The sequence spans 213 residues: ATP phosphoribosyltransferase (213 aa).

Belongs to the ATP phosphoribosyltransferase family. Short subfamily. As to quaternary structure, heteromultimer composed of HisG and HisZ subunits.

The protein resides in the cytoplasm. The catalysed reaction is 1-(5-phospho-beta-D-ribosyl)-ATP + diphosphate = 5-phospho-alpha-D-ribose 1-diphosphate + ATP. It functions in the pathway amino-acid biosynthesis; L-histidine biosynthesis; L-histidine from 5-phospho-alpha-D-ribose 1-diphosphate: step 1/9. Catalyzes the condensation of ATP and 5-phosphoribose 1-diphosphate to form N'-(5'-phosphoribosyl)-ATP (PR-ATP). Has a crucial role in the pathway because the rate of histidine biosynthesis seems to be controlled primarily by regulation of HisG enzymatic activity. The chain is ATP phosphoribosyltransferase from Synechococcus sp. (strain RCC307).